The primary structure comprises 123 residues: Large ribosomal subunit protein uL18 (123 aa).

The protein belongs to the universal ribosomal protein uL18 family. As to quaternary structure, part of the 50S ribosomal subunit; part of the 5S rRNA/L5/L18/L25 subcomplex. Contacts the 5S and 23S rRNAs.

Functionally, this is one of the proteins that bind and probably mediate the attachment of the 5S RNA into the large ribosomal subunit, where it forms part of the central protuberance. In Chlamydia trachomatis serovar A (strain ATCC VR-571B / DSM 19440 / HAR-13), this protein is Large ribosomal subunit protein uL18.